Reading from the N-terminus, the 341-residue chain is tRNA N6-adenosine threonylcarbamoyltransferase (341 aa).

2 residues coordinate Fe cation: His115 and His119. Substrate contacts are provided by residues 137 to 141 (IVSGG), Asp170, Gly183, Asp187, and Asn276. Asp304 contacts Fe cation.

This sequence belongs to the KAE1 / TsaD family. Fe(2+) is required as a cofactor.

Its subcellular location is the cytoplasm. The catalysed reaction is L-threonylcarbamoyladenylate + adenosine(37) in tRNA = N(6)-L-threonylcarbamoyladenosine(37) in tRNA + AMP + H(+). In terms of biological role, required for the formation of a threonylcarbamoyl group on adenosine at position 37 (t(6)A37) in tRNAs that read codons beginning with adenine. Is involved in the transfer of the threonylcarbamoyl moiety of threonylcarbamoyl-AMP (TC-AMP) to the N6 group of A37, together with TsaE and TsaB. TsaD likely plays a direct catalytic role in this reaction. The polypeptide is tRNA N6-adenosine threonylcarbamoyltransferase (Staphylococcus aureus (strain bovine RF122 / ET3-1)).